The following is a 330-amino-acid chain: Tryptophan--tRNA ligase (330 aa).

ATP-binding positions include 10 to 12 (QPS) and 18 to 19 (GN). The 'HIGH' region motif lies at 11–19 (PSGTLTLGN). L-tryptophan is bound at residue Asp133. Residues 145 to 147 (GED), Ile184, and 193 to 197 (KMSKS) each bind ATP. The 'KMSKS' region signature appears at 193–197 (KMSKS).

This sequence belongs to the class-I aminoacyl-tRNA synthetase family. As to quaternary structure, homodimer.

It localises to the cytoplasm. The catalysed reaction is tRNA(Trp) + L-tryptophan + ATP = L-tryptophyl-tRNA(Trp) + AMP + diphosphate + H(+). Its function is as follows. Catalyzes the attachment of tryptophan to tRNA(Trp). The protein is Tryptophan--tRNA ligase of Halalkalibacterium halodurans (strain ATCC BAA-125 / DSM 18197 / FERM 7344 / JCM 9153 / C-125) (Bacillus halodurans).